Reading from the N-terminus, the 290-residue chain is Carbonic anhydrase-related protein (290 aa).

Ser5 bears the Phosphoserine mark. Residues 27 to 289 (VEWGYEEGVE…LSDRVIRAAF (263 aa)) enclose the Alpha-carbonic anhydrase domain. His87 functions as the Proton donor/acceptor in the catalytic mechanism. Residues His118 and His141 each contribute to the Zn(2+) site.

It belongs to the alpha-carbonic anhydrase family.

Functionally, does not have a carbonic anhydrase catalytic activity. This Rattus norvegicus (Rat) protein is Carbonic anhydrase-related protein (Ca8).